Consider the following 802-residue polypeptide: Bifunctional purine biosynthetic protein ADE5,7 (802 aa).

The GARS stretch occupies residues 1–450 (MLNILVLGNG…QNSESSKVAI (450 aa)). The ATP-grasp domain occupies 114 to 330 (KRFMSKHNIP…LAQVFLAAAE (217 aa)). Residue 141–203 (QAHTDKAFVI…EQFLEGDEIS (63 aa)) participates in ATP binding. Glu298 and Asn300 together coordinate Mg(2+). Residues 451–802 (TYADSGVSVD…CVIENGTKLY (352 aa)) are AIRS. A phosphoserine mark is found at Ser455 and Ser458.

The protein in the N-terminal section; belongs to the GARS family. In the C-terminal section; belongs to the AIR synthase family. Mg(2+) is required as a cofactor. Mn(2+) serves as cofactor.

Its subcellular location is the cytoplasm. The catalysed reaction is 5-phospho-beta-D-ribosylamine + glycine + ATP = N(1)-(5-phospho-beta-D-ribosyl)glycinamide + ADP + phosphate + H(+). It catalyses the reaction 2-formamido-N(1)-(5-O-phospho-beta-D-ribosyl)acetamidine + ATP = 5-amino-1-(5-phospho-beta-D-ribosyl)imidazole + ADP + phosphate + H(+). It functions in the pathway purine metabolism; IMP biosynthesis via de novo pathway; 5-amino-1-(5-phospho-D-ribosyl)imidazole from N(2)-formyl-N(1)-(5-phospho-D-ribosyl)glycinamide: step 2/2. It participates in purine metabolism; IMP biosynthesis via de novo pathway; N(1)-(5-phospho-D-ribosyl)glycinamide from 5-phospho-alpha-D-ribose 1-diphosphate: step 2/2. In terms of biological role, catalyzes the second and fifth step in the 'de novo' purine biosynthesis pathway; contains phosphoribosylamine--glycine ligase (GARS) and phosphoribosylformylglycinamidine cyclo-ligase (AIRS) activities. This chain is Bifunctional purine biosynthetic protein ADE5,7, found in Saccharomyces cerevisiae (strain ATCC 204508 / S288c) (Baker's yeast).